Here is a 441-residue protein sequence, read N- to C-terminus: Chitinase-like protein Idgf3 (441 aa).

Positions 1–23 (MTGSLWLSLALSLAVLAQFKVSA) are cleaved as a signal peptide. A GH18 domain is found at 25–441 (PNLVCFYDSQ…MLRAIKYRLL (417 aa)). Cys29 and Cys56 are disulfide-bonded. A glycan (N-linked (GlcNAc...) asparagine) is linked at Asn221. A disordered region spans residues 307-331 (KDSGDSGMPVVPSTQGPAPAGPQSK). Cys342 and Cys425 form a disulfide bridge.

It belongs to the glycosyl hydrolase 18 family. IDGF subfamily. Post-translationally, glycosylated. In terms of tissue distribution, primarily expressed in yolk cells and fat body. In larvae, it is expressed in small and large salivary gland cells, and weakly expressed in imaginal disks. Less expressed than Idgf2 and Idgf4.

It localises to the secreted. Functionally, cooperates with insulin-like peptides to stimulate the proliferation, polarization and motility of imaginal disk cells. May act by stabilizing the binding of insulin-like peptides to its receptor through a simultaneous interaction with both molecules to form a multiprotein signaling complex. In Drosophila melanogaster (Fruit fly), this protein is Chitinase-like protein Idgf3 (Idgf3).